The sequence spans 517 residues: UDP-N-acetylmuramyl-tripeptide synthetase (517 aa).

Residue Ser38 participates in UDP-N-acetyl-alpha-D-muramoyl-L-alanyl-D-glutamate binding. Residue Gly116 to Thr122 coordinates ATP. UDP-N-acetyl-alpha-D-muramoyl-L-alanyl-D-glutamate-binding positions include Asn160, Thr162–Thr163, Ser189, and Arg197. Lys231 carries the post-translational modification N6-carboxylysine.

It belongs to the MurCDEF family. MurE subfamily. Post-translationally, carboxylation is probably crucial for Mg(2+) binding and, consequently, for the gamma-phosphate positioning of ATP.

The protein resides in the cytoplasm. The protein operates within cell wall biogenesis; peptidoglycan biosynthesis. In terms of biological role, catalyzes the addition of an amino acid to the nucleotide precursor UDP-N-acetylmuramoyl-L-alanyl-D-glutamate (UMAG) in the biosynthesis of bacterial cell-wall peptidoglycan. The sequence is that of UDP-N-acetylmuramyl-tripeptide synthetase from Lacticaseibacillus paracasei (strain ATCC 334 / BCRC 17002 / CCUG 31169 / CIP 107868 / KCTC 3260 / NRRL B-441) (Lactobacillus paracasei).